The sequence spans 526 residues: Glucose-6-phosphate isomerase (526 aa).

Residue Glu-323 is the Proton donor of the active site. Residues His-352 and Lys-454 contribute to the active site.

Belongs to the GPI family.

It is found in the cytoplasm. The enzyme catalyses alpha-D-glucose 6-phosphate = beta-D-fructose 6-phosphate. It participates in carbohydrate biosynthesis; gluconeogenesis. It functions in the pathway carbohydrate degradation; glycolysis; D-glyceraldehyde 3-phosphate and glycerone phosphate from D-glucose: step 2/4. Its function is as follows. Catalyzes the reversible isomerization of glucose-6-phosphate to fructose-6-phosphate. The chain is Glucose-6-phosphate isomerase from Prochlorococcus marinus subsp. pastoris (strain CCMP1986 / NIES-2087 / MED4).